Here is a 395-residue protein sequence, read N- to C-terminus: Chaperone protein DnaJ 2 (395 aa).

The region spanning 10–75 (NYYADLGVSS…KKRKEYDELK (66 aa)) is the J domain. The segment at 165-242 (GTTIPVELTG…CHGRGTVRKS (78 aa)) adopts a CR-type zinc-finger fold. Cysteine 178, cysteine 181, cysteine 194, cysteine 197, cysteine 216, cysteine 219, cysteine 230, and cysteine 233 together coordinate Zn(2+). 4 CXXCXGXG motif repeats span residues 178 to 185 (CNTCHGSG), 194 to 201 (CGTCDGTG), 216 to 223 (CATCGGTG), and 230 to 237 (CDNCHGRG).

The protein belongs to the DnaJ family. Homodimer. It depends on Zn(2+) as a cofactor.

The protein resides in the cytoplasm. Its function is as follows. Participates actively in the response to hyperosmotic and heat shock by preventing the aggregation of stress-denatured proteins and by disaggregating proteins, also in an autonomous, DnaK-independent fashion. Unfolded proteins bind initially to DnaJ; upon interaction with the DnaJ-bound protein, DnaK hydrolyzes its bound ATP, resulting in the formation of a stable complex. GrpE releases ADP from DnaK; ATP binding to DnaK triggers the release of the substrate protein, thus completing the reaction cycle. Several rounds of ATP-dependent interactions between DnaJ, DnaK and GrpE are required for fully efficient folding. Also involved, together with DnaK and GrpE, in the DNA replication of plasmids through activation of initiation proteins. The polypeptide is Chaperone protein DnaJ 2 (Corynebacterium glutamicum (strain ATCC 13032 / DSM 20300 / JCM 1318 / BCRC 11384 / CCUG 27702 / LMG 3730 / NBRC 12168 / NCIMB 10025 / NRRL B-2784 / 534)).